Here is a 316-residue protein sequence, read N- to C-terminus: Zinc finger protein 367 (316 aa).

Residues V61–I97 are disordered. Over residues G70–A82 the composition is skewed to low complexity. 2 C2H2-type zinc fingers span residues I121–H143 and Y149–H173. The tract at residues Q234–L294 is disordered. The segment covering E255–E278 has biased composition (acidic residues). Residues T289–N313 adopt a coiled-coil conformation.

The protein belongs to the krueppel C2H2-type zinc-finger protein family.

Its subcellular location is the nucleus. Transcriptional activator. The chain is Zinc finger protein 367 (znf367) from Danio rerio (Zebrafish).